The primary structure comprises 424 residues: Zinc finger and BTB domain-containing protein 6 (424 aa).

One can recognise a BTB domain in the interval 33-97 (CDVSIYINDT…CYTGALEVKR (65 aa)). S202 is subject to Phosphoserine. C2H2-type zinc fingers lie at residues 301 to 323 (HQCP…LKMH), 326 to 348 (FLCL…IRGH), 354 to 376 (FQCT…LNIH), and 382 to 405 (YKCH…TSVH). A disordered region spans residues 402–424 (TSVHGRSSGEKLSRPDLKRQSLL). Basic and acidic residues predominate over residues 408-424 (SSGEKLSRPDLKRQSLL).

As to expression, widely expressed with highest levels in brain.

It localises to the nucleus. May be involved in transcriptional regulation. This Homo sapiens (Human) protein is Zinc finger and BTB domain-containing protein 6 (ZBTB6).